A 396-amino-acid chain; its full sequence is G-protein coupled receptor 84 (396 aa).

Residues 1-26 (MWNASDVNFSCYHESVLGYRYVAVSW) are Extracellular-facing. Residues Asn3 and Asn8 are each glycosylated (N-linked (GlcNAc...) asparagine). The helical transmembrane segment at 27–47 (GIVVAVTGTVGNVLTLLALAI) threads the bilayer. The Cytoplasmic portion of the chain corresponds to 48-57 (QPKLRTRFNL). Residues 58–78 (LIANLTVADLLYCTLLQPFSV) traverse the membrane as a helical segment. At 79 to 94 (DTYLHLHWRTGATFCQ) the chain is on the extracellular side. A helical membrane pass occupies residues 95 to 115 (IFGFLLFVSNSVSILTLCLIA). Over 116–144 (LGRYLLIAHPKLFPQVFSAKGIVLALVST) the chain is Cytoplasmic. Residues 145–165 (WVVAVASFAPLWPIYILVPVV) form a helical membrane-spanning segment. The Extracellular portion of the chain corresponds to 166-180 (CTCSFDRIRGQPYTT). The helical transmembrane segment at 181 to 201 (ILMGIYFVVGLSSVGVFYCLI) threads the bilayer. Residues 202-320 (HQQVKRAAQA…PSEFGKVTRM (119 aa)) are Cytoplasmic-facing. A phosphoserine mark is found at Ser221 and Ser224. A disordered region spans residues 243 to 310 (SGLASGGPSE…TKGAQRAQDS (68 aa)). 2 positions are modified to phosphothreonine: Thr263 and Thr264. Residues 321–341 (CFAVFLCFTLSYIPFLLLNIL) traverse the membrane as a helical segment. Over 342-352 (DAKVQAPRVVH) the chain is Extracellular. The chain crosses the membrane as a helical span at residues 353–373 (MLAANLTWLNGCINPVLYAAM). Over 374–396 (NRQFRQAYGSLLRRGPQSFHRFH) the chain is Cytoplasmic.

This sequence belongs to the G-protein coupled receptor 1 family. As to quaternary structure, interacts with ARRB2 and ARR3. Post-translationally, phosphorylated by a subset of GPR84-activating ligands. Constitutively phosphorylated at Ser-221 and Ser-224 in the absence of 2-HTP. By contrast, Thr-263 and Thr-264 are phosphorylated only following prior cell treatment with 2-HTP.

The protein resides in the cell membrane. In terms of biological role, g protein-coupled receptor that responds endogenously to dietary fatty acids or nutrient, specifically medium-chain free fatty acid (FFA) with carbon chain lengths of C9 to C14. Capric acid (C10:0), undecanoic acid (C11:0) and lauric acid (C12:0) are the most potent agonists. In immune cells, functions as a pro-inflammatory receptor via 6-OAU and promotes the expression of pro-inflammatory mediators such as TNFalpha, IL-6 and IL-12B as well as stimulating chemotactic responses through activation of signaling mediators AKT, ERK and NF-kappa-B. In addition, triggers increased bacterial adhesion and phagocytosis in macrophages and regulates pro-inflammatory function via enhancing NLRP3 inflammasome activation. Also plays an important role in inflammation by modulating neutrophil functions. Mechanistically, promotes neutrophil chemotaxis, reactive oxygen species (ROS) production and degranulation via LYN-AKT/ERK pathway. To regulate ROS, communicates with the two formyl peptide receptors FPR2 and FPR1 to control the NADPH oxidase activity in neutrophils. The protein is G-protein coupled receptor 84 (GPR84) of Bos taurus (Bovine).